The sequence spans 603 residues: Probable NOT transcription complex subunit VIP2 (603 aa).

Composition is skewed to polar residues over residues methionine 1–serine 28 and asparagine 36–serine 70. Disordered regions lie at residues methionine 1–serine 70, asparagine 212–leucine 242, alanine 306–serine 335, and serine 355–serine 377. The span at glycine 312–serine 335 shows a compositional bias: polar residues.

The protein belongs to the CNOT2/3/5 family. In terms of assembly, binds to VIP1. Interacts with Agrobacterium tumefaciens VirE2. Forms a complex made of Agrobacterium VirE2, VIP1, VIP2 and single-stranded DNA (ssDNA).

The protein localises to the nucleus. Its function is as follows. Transcriptional regulator required for Agrobacterium-mediated stable genetic transformation by T-DNA integration in host genome, but not for T-DNA transient expression. The chain is Probable NOT transcription complex subunit VIP2 (VIP2) from Nicotiana benthamiana.